A 596-amino-acid chain; its full sequence is Aspartate--tRNA(Asp/Asn) ligase (596 aa).

Glu-175 is an L-aspartate binding site. The interval Gln-199–Lys-202 is aspartate. The L-aspartate site is built by Arg-221 and His-451. Arg-221–Glu-223 contributes to the ATP binding site. Glu-485 contributes to the ATP binding site. L-aspartate is bound at residue Arg-492. Gly-537–Arg-540 serves as a coordination point for ATP.

The protein belongs to the class-II aminoacyl-tRNA synthetase family. Type 1 subfamily. In terms of assembly, homodimer.

The protein localises to the cytoplasm. The enzyme catalyses tRNA(Asx) + L-aspartate + ATP = L-aspartyl-tRNA(Asx) + AMP + diphosphate. Functionally, aspartyl-tRNA synthetase with relaxed tRNA specificity since it is able to aspartylate not only its cognate tRNA(Asp) but also tRNA(Asn). Reaction proceeds in two steps: L-aspartate is first activated by ATP to form Asp-AMP and then transferred to the acceptor end of tRNA(Asp/Asn). In Zymomonas mobilis subsp. mobilis (strain ATCC 31821 / ZM4 / CP4), this protein is Aspartate--tRNA(Asp/Asn) ligase.